The sequence spans 225 residues: Putative ankyrin repeat protein RBE_1025 (225 aa).

4 ANK repeats span residues 6 to 35 (LSKD…AINP), 41 to 71 (NGKT…NVNI), 75 to 120 (TGFT…DVNI), and 124 to 153 (KGNT…SPFI).

The chain is Putative ankyrin repeat protein RBE_1025 from Rickettsia bellii (strain RML369-C).